The primary structure comprises 101 residues: Small ribosomal subunit protein uS14 (101 aa).

This sequence belongs to the universal ribosomal protein uS14 family. In terms of assembly, part of the 30S ribosomal subunit. Contacts proteins S3 and S10.

Functionally, binds 16S rRNA, required for the assembly of 30S particles and may also be responsible for determining the conformation of the 16S rRNA at the A site. This Shewanella sediminis (strain HAW-EB3) protein is Small ribosomal subunit protein uS14.